We begin with the raw amino-acid sequence, 394 residues long: 2-oxoglutarate and iron-dependent oxygenase domain-containing protein CP2 (394 aa).

The segment at 1 to 35 (MSSEQREGSQETTTTTVEGNGTIAGQNSHSAAPTT) is disordered. Positions 17-35 (VEGNGTIAGQNSHSAAPTT) are enriched in polar residues. Residues 248-347 (DSHHGFVVEY…RVNMLLWCRS (100 aa)) form the Fe2OG dioxygenase domain. His268, Asp270, and His328 together coordinate Fe cation. A 2-oxoglutarate-binding site is contributed by Arg338.

Requires Fe(2+) as cofactor. L-ascorbate serves as cofactor. Expressed in roots, cotyledons, rosette leaves, cauline leaves, inflorescences and siliques.

Its subcellular location is the nucleus. It is found in the nucleoplasm. In terms of biological role, participates in the epigenetic repression of flowering genes in association with ICU11. Functions in the repression of several members of the MADS-box transcription factors family, including SEP3, during vegetative development via histone modification. This chain is 2-oxoglutarate and iron-dependent oxygenase domain-containing protein CP2, found in Arabidopsis thaliana (Mouse-ear cress).